A 461-amino-acid chain; its full sequence is Demethyllactenocin mycarosyltransferase (461 aa).

Residues methionine 1 to glycine 21 form a disordered region.

The protein belongs to the UDP-glycosyltransferase family.

It catalyses the reaction dTDP-beta-L-mycarose + demethyllactenocin = demethylmacrocin + dTDP + H(+). Its function is as follows. Involved in the biosynthesis of mycarose which is a 6-deoxyhexose sugar required during production of the macrolide antibiotic tylosin. Catalyzes the transfer of L-mycarosyl from dTDP-beta-L-mycarose to demethyllactenocin to yield demethylmacrocin. The protein is Demethyllactenocin mycarosyltransferase (tylCV) of Streptomyces fradiae (Streptomyces roseoflavus).